The chain runs to 115 residues: Large ribosomal subunit protein bL19 (115 aa).

The protein belongs to the bacterial ribosomal protein bL19 family.

Functionally, this protein is located at the 30S-50S ribosomal subunit interface and may play a role in the structure and function of the aminoacyl-tRNA binding site. In Bacillus pumilus (strain SAFR-032), this protein is Large ribosomal subunit protein bL19.